Here is a 209-residue protein sequence, read N- to C-terminus: MDLITSLQEITKLSHLYYERQWMYATAGNLSTRDGSSRDQFWITASGKHKGELKDTDFVCVSVADGTLLKASDGLKPSAETSIHQVLYSQMPDIGCCLHVHTIDSNLLEFGVGKEEGSREIPIPPIEIIKAFGIWDEKPNLTMPVFYNHTHVPTIADEIKRYFISVGIPKVPFLLIEGHGPTVWGKSIAEANKHLEAVHFLLQVMARKV.

Zn(2+)-binding residues include His99 and His101.

The protein belongs to the aldolase class II family. MtnB subfamily. Zn(2+) is required as a cofactor.

The enzyme catalyses 5-(methylsulfanyl)-D-ribulose 1-phosphate = 5-methylsulfanyl-2,3-dioxopentyl phosphate + H2O. It participates in amino-acid biosynthesis; L-methionine biosynthesis via salvage pathway; L-methionine from S-methyl-5-thio-alpha-D-ribose 1-phosphate: step 2/6. Catalyzes the dehydration of methylthioribulose-1-phosphate (MTRu-1-P) into 2,3-diketo-5-methylthiopentyl-1-phosphate (DK-MTP-1-P). The sequence is that of Methylthioribulose-1-phosphate dehydratase from Leptospira biflexa serovar Patoc (strain Patoc 1 / Ames).